The following is a 214-amino-acid chain: Alpha-S1-casein (214 aa).

Positions 1–15 (MKLLILTCLVAVALA) are cleaved as a signal peptide. Phosphoserine occurs at positions 63, 79, 81, 82, 83, and 90. 2 consecutive repeats follow at residues 85–99 (EIVP…IQKE) and 125–140 (EIVP…SMKE).

The protein belongs to the alpha-casein family. As to expression, mammary gland specific. Secreted in milk.

The protein resides in the secreted. Important role in the capacity of milk to transport calcium phosphate. The sequence is that of Alpha-S1-casein (CSN1S1) from Bubalus bubalis (Domestic water buffalo).